The sequence spans 730 residues: Polyphosphate kinase (730 aa).

A compositionally biased stretch (basic and acidic residues) spans 1 to 21 (MMRHDRNVTEIDAETRPDENL). The disordered stretch occupies residues 1-39 (MMRHDRNVTEIDAETRPDENLWHSGDSAVGAPPAATPAA). Asparagine 86 serves as a coordination point for ATP. Positions 423 and 453 each coordinate Mg(2+). Histidine 483 functions as the Phosphohistidine intermediate in the catalytic mechanism. Positions 516, 612, and 640 each coordinate ATP.

It belongs to the polyphosphate kinase 1 (PPK1) family. The cofactor is Mg(2+). In terms of processing, an intermediate of this reaction is the autophosphorylated ppk in which a phosphate is covalently linked to a histidine residue through a N-P bond.

It carries out the reaction [phosphate](n) + ATP = [phosphate](n+1) + ADP. In terms of biological role, catalyzes the reversible transfer of the terminal phosphate of ATP to form a long-chain polyphosphate (polyP). This Mycolicibacterium paratuberculosis (strain ATCC BAA-968 / K-10) (Mycobacterium paratuberculosis) protein is Polyphosphate kinase.